The chain runs to 318 residues: Ribosomal RNA small subunit methyltransferase H (318 aa).

S-adenosyl-L-methionine-binding positions include 34 to 36 (GGH), Asp53, Phe82, Asp103, and Gln110.

This sequence belongs to the methyltransferase superfamily. RsmH family.

Its subcellular location is the cytoplasm. It catalyses the reaction cytidine(1402) in 16S rRNA + S-adenosyl-L-methionine = N(4)-methylcytidine(1402) in 16S rRNA + S-adenosyl-L-homocysteine + H(+). In terms of biological role, specifically methylates the N4 position of cytidine in position 1402 (C1402) of 16S rRNA. This is Ribosomal RNA small subunit methyltransferase H from Limosilactobacillus reuteri (strain DSM 20016) (Lactobacillus reuteri).